The chain runs to 218 residues: CD99 antigen-like protein 2 (218 aa).

The signal sequence occupies residues 1-25 (MVAWRSAFLVCLAFSLATLVQRGSG). Residues 26–136 (DFDDFNLKDA…PGSGMVAETG (111 aa)) lie on the Extracellular side of the membrane. Residues 72-128 (LADALDDRNDRDDGRRKPIAGGGGFSDKDLEDIVGGGEYKPDKGKGDGRYGSNDDPG) form a disordered region. Composition is skewed to basic and acidic residues over residues 76–87 (LDDRNDRDDGRR) and 110–119 (YKPDKGKGDG). S129 carries O-linked (Xyl...) (chondroitin sulfate) serine glycosylation. A helical transmembrane segment spans residues 137–157 (TIAGVASALAMALIGAVSSYI). Over 158 to 218 (SYQQKKFCFS…EPPPSEPARI (61 aa)) the chain is Cytoplasmic.

Belongs to the CD99 family. In terms of processing, O-glycosylated.

The protein localises to the cell membrane. It localises to the cell junction. It is found in the secreted. Its function is as follows. Plays a role in a late step of leukocyte extravasation helping cells to overcome the endothelial basement membrane. Acts at the same site as, but independently of, PECAM1. Homophilic adhesion molecule, but these interactions may not be required for cell aggregation. This Pongo abelii (Sumatran orangutan) protein is CD99 antigen-like protein 2 (CD99L2).